The chain runs to 134 residues: MSYTRTVHSSTSILKMNSALQISCLLVVLGCLLGSGHCQSEAEFAAKSREIAQMFGNPSVDKYTKARNLPALLAFYEKYSSRLRLTPQERNSVNNAMRQYKAQRNQQVDGVSAQGGWLFDIIKSAISIIVKAVE.

The first 38 residues, 1-38, serve as a signal peptide directing secretion; it reads MSYTRTVHSSTSILKMNSALQISCLLVVLGCLLGSGHC.

Belongs to the Turandot family.

It is found in the secreted. A humoral factor that may play a role in stress tolerance. The protein is Protein Turandot E of Drosophila simulans (Fruit fly).